Here is a 289-residue protein sequence, read N- to C-terminus: ATP synthase gamma chain (289 aa).

This sequence belongs to the ATPase gamma chain family. F-type ATPases have 2 components, CF(1) - the catalytic core - and CF(0) - the membrane proton channel. CF(1) has five subunits: alpha(3), beta(3), gamma(1), delta(1), epsilon(1). CF(0) has three main subunits: a, b and c.

The protein resides in the cell inner membrane. In terms of biological role, produces ATP from ADP in the presence of a proton gradient across the membrane. The gamma chain is believed to be important in regulating ATPase activity and the flow of protons through the CF(0) complex. This chain is ATP synthase gamma chain, found in Histophilus somni (strain 129Pt) (Haemophilus somnus).